We begin with the raw amino-acid sequence, 100 residues long: Large ribosomal subunit protein uL23 (100 aa).

The protein belongs to the universal ribosomal protein uL23 family. As to quaternary structure, part of the 50S ribosomal subunit. Contacts protein L29, and trigger factor when it is bound to the ribosome.

Functionally, one of the early assembly proteins it binds 23S rRNA. One of the proteins that surrounds the polypeptide exit tunnel on the outside of the ribosome. Forms the main docking site for trigger factor binding to the ribosome. The protein is Large ribosomal subunit protein uL23 of Shewanella denitrificans (strain OS217 / ATCC BAA-1090 / DSM 15013).